The primary structure comprises 123 residues: MLQNSELLQEYLPIAIFFGIAVLLSVLIMILPNLLSTKKYNKDKLEPYECGFEPFSDARSKFDIRFYLVAILFIIFDLEIAFLVPWAISLNTIGKMGFFSMMFFLFVLIIGFIYEWTKGALDW.

Transmembrane regions (helical) follow at residues 11–31, 68–88, and 93–113; these read YLPI…IMIL, LVAI…PWAI, and IGKM…IGFI.

This sequence belongs to the complex I subunit 3 family. In terms of assembly, NDH-1 is composed of 14 different subunits. Subunits NuoA, H, J, K, L, M, N constitute the membrane sector of the complex.

It is found in the cell inner membrane. The enzyme catalyses a quinone + NADH + 5 H(+)(in) = a quinol + NAD(+) + 4 H(+)(out). NDH-1 shuttles electrons from NADH, via FMN and iron-sulfur (Fe-S) centers, to quinones in the respiratory chain. The immediate electron acceptor for the enzyme in this species is believed to be ubiquinone. Couples the redox reaction to proton translocation (for every two electrons transferred, four hydrogen ions are translocated across the cytoplasmic membrane), and thus conserves the redox energy in a proton gradient. The sequence is that of NADH-quinone oxidoreductase subunit A from Rickettsia prowazekii (strain Madrid E).